Here is a 366-residue protein sequence, read N- to C-terminus: NAD(P)H-quinone oxidoreductase subunit 1, chloroplastic (366 aa).

8 helical membrane passes run 29–49 (WITASILILVSGVVIGVLVIV), 97–117 (LLFSIGPAIVVIPVLLSYLVI), 130–150 (IGVFFWIAVSSIAPLGLFMAG), 166–186 (VAQAISYEIPLALCVLSISLL), 202–222 (FGFWGWNVWRQPIGFIAFLIA), 254–274 (FGLFYVASYLNLLVSSLFVTV), 307–327 (VIIGIIITLAKAYSFLFISIV), and 340–360 (LLNLGWKFLLPIALGNLLLTA).

Belongs to the complex I subunit 1 family. NDH is composed of at least 16 different subunits, 5 of which are encoded in the nucleus.

It is found in the plastid. The protein resides in the chloroplast thylakoid membrane. The enzyme catalyses a plastoquinone + NADH + (n+1) H(+)(in) = a plastoquinol + NAD(+) + n H(+)(out). It carries out the reaction a plastoquinone + NADPH + (n+1) H(+)(in) = a plastoquinol + NADP(+) + n H(+)(out). Its function is as follows. NDH shuttles electrons from NAD(P)H:plastoquinone, via FMN and iron-sulfur (Fe-S) centers, to quinones in the photosynthetic chain and possibly in a chloroplast respiratory chain. The immediate electron acceptor for the enzyme in this species is believed to be plastoquinone. Couples the redox reaction to proton translocation, and thus conserves the redox energy in a proton gradient. The protein is NAD(P)H-quinone oxidoreductase subunit 1, chloroplastic of Anthoceros angustus (Hornwort).